Here is a 430-residue protein sequence, read N- to C-terminus: Maltoporin (430 aa).

The first 23 residues, 1–23, serve as a signal peptide directing secretion; the sequence is MNNKKTLLAVAISGMMFATSAAA.

This sequence belongs to the porin LamB (TC 1.B.3) family. As to quaternary structure, homotrimer formed of three 18-stranded antiparallel beta-barrels, containing three independent channels.

It is found in the cell outer membrane. It catalyses the reaction beta-maltose(in) = beta-maltose(out). In terms of biological role, involved in the transport of maltose and maltodextrins. This chain is Maltoporin, found in Actinobacillus succinogenes (strain ATCC 55618 / DSM 22257 / CCUG 43843 / 130Z).